We begin with the raw amino-acid sequence, 78 residues long: Putative antitoxin PF1222 (78 aa).

This sequence belongs to the UPF0330 family.

In terms of biological role, possibly the antitoxin component of a type II toxin-antitoxin (TA) system. This is Putative antitoxin PF1222 from Pyrococcus furiosus (strain ATCC 43587 / DSM 3638 / JCM 8422 / Vc1).